The sequence spans 503 residues: GMP synthase [glutamine-hydrolyzing] (503 aa).

A Glutamine amidotransferase type-1 domain is found at 1–189; sequence MVLVLDFGSQ…FLELAGVKRD (189 aa). The Nucleophile role is filled by cysteine 78. Active-site residues include histidine 164 and glutamate 166. Residues 190–378 form the GMPS ATP-PPase domain; the sequence is WTPEHVLEEL…LGLPDTLRLR (189 aa). An ATP-binding site is contributed by 217 to 223; it reads SGGVDSS.

As to quaternary structure, homodimer.

It carries out the reaction XMP + L-glutamine + ATP + H2O = GMP + L-glutamate + AMP + diphosphate + 2 H(+). Its pathway is purine metabolism; GMP biosynthesis; GMP from XMP (L-Gln route): step 1/1. Its function is as follows. Catalyzes the synthesis of GMP from XMP. This Thermus thermophilus (strain ATCC 27634 / DSM 579 / HB8) protein is GMP synthase [glutamine-hydrolyzing].